The chain runs to 498 residues: Glutamyl-tRNA(Gln) amidotransferase subunit A (498 aa).

Catalysis depends on charge relay system residues lysine 79 and serine 154. Serine 178 acts as the Acyl-ester intermediate in catalysis.

Belongs to the amidase family. GatA subfamily. In terms of assembly, heterotrimer of A, B and C subunits.

The enzyme catalyses L-glutamyl-tRNA(Gln) + L-glutamine + ATP + H2O = L-glutaminyl-tRNA(Gln) + L-glutamate + ADP + phosphate + H(+). Allows the formation of correctly charged Gln-tRNA(Gln) through the transamidation of misacylated Glu-tRNA(Gln) in organisms which lack glutaminyl-tRNA synthetase. The reaction takes place in the presence of glutamine and ATP through an activated gamma-phospho-Glu-tRNA(Gln). This is Glutamyl-tRNA(Gln) amidotransferase subunit A from Psychrobacter cryohalolentis (strain ATCC BAA-1226 / DSM 17306 / VKM B-2378 / K5).